A 222-amino-acid polypeptide reads, in one-letter code: 3-demethoxyubiquinol 3-hydroxylase (222 aa).

Fe cation contacts are provided by Glu71, Glu101, His104, Glu153, Glu185, and His188.

Belongs to the COQ7 family. Requires Fe cation as cofactor.

Its subcellular location is the cell membrane. It carries out the reaction a 5-methoxy-2-methyl-3-(all-trans-polyprenyl)benzene-1,4-diol + AH2 + O2 = a 3-demethylubiquinol + A + H2O. It participates in cofactor biosynthesis; ubiquinone biosynthesis. Functionally, catalyzes the hydroxylation of 2-nonaprenyl-3-methyl-6-methoxy-1,4-benzoquinol during ubiquinone biosynthesis. The sequence is that of 3-demethoxyubiquinol 3-hydroxylase from Bordetella bronchiseptica (strain ATCC BAA-588 / NCTC 13252 / RB50) (Alcaligenes bronchisepticus).